A 214-amino-acid polypeptide reads, in one-letter code: Phosphoribosylglycinamide formyltransferase (214 aa).

A N(1)-(5-phospho-beta-D-ribosyl)glycinamide-binding site is contributed by 12–14 (GSN). (6R)-10-formyltetrahydrofolate is bound by residues 105–108 (LLIL) and N123. Catalysis depends on H125, which acts as the Proton donor. D167 contributes to the (6R)-10-formyltetrahydrofolate binding site. E197 lines the N(1)-(5-phospho-beta-D-ribosyl)glycinamide pocket.

Belongs to the GART family.

It catalyses the reaction N(1)-(5-phospho-beta-D-ribosyl)glycinamide + (6R)-10-formyltetrahydrofolate = N(2)-formyl-N(1)-(5-phospho-beta-D-ribosyl)glycinamide + (6S)-5,6,7,8-tetrahydrofolate + H(+). It functions in the pathway purine metabolism; IMP biosynthesis via de novo pathway; N(2)-formyl-N(1)-(5-phospho-D-ribosyl)glycinamide from N(1)-(5-phospho-D-ribosyl)glycinamide (10-formyl THF route): step 1/1. This chain is Phosphoribosylglycinamide formyltransferase, found in Saccharomyces cerevisiae (strain ATCC 204508 / S288c) (Baker's yeast).